The following is a 606-amino-acid chain: NADH-ubiquinone oxidoreductase chain 5 (606 aa).

The next 15 membrane-spanning stretches (helical) occupy residues 3-23, 38-58, 87-107, 124-144, 180-200, 216-236, 244-264, 276-296, 304-323, 328-350, 369-389, 404-424, 460-480, 483-503, and 586-606; these read VINLIPTLTLTSLIILTLPIT, ITKMAVTCAFAISLIPTLLFL, FFSLTFMPIALFITWSIMEFS, LLLFLITMLILVSANNLLQLF, IGDMGFIMMMAWFIIHLNSWE, LLGLLLASAGKSAQFGLHPWL, TPVSALLHSSTMVMAGVFTLI, IQTSTLCLGAITTLFTAICAL, IIALSTSSQLGLMMVTIGIN, AFTHMCTHAFFKAMLFLSSGSII, MPITSTAIIIGSLALTGMPFL, MSYINTWALLITLIAVSMTAS, LILGSIFMGFFISMNTIPHTT, MTMPPHLKFMALAVTLLGFTV, and LMKLYFLSFLLSITLGLLITL.

The protein belongs to the complex I subunit 5 family. As to quaternary structure, core subunit of respiratory chain NADH dehydrogenase (Complex I) which is composed of 45 different subunits.

Its subcellular location is the mitochondrion inner membrane. The enzyme catalyses a ubiquinone + NADH + 5 H(+)(in) = a ubiquinol + NAD(+) + 4 H(+)(out). Functionally, core subunit of the mitochondrial membrane respiratory chain NADH dehydrogenase (Complex I) which catalyzes electron transfer from NADH through the respiratory chain, using ubiquinone as an electron acceptor. Essential for the catalytic activity and assembly of complex I. This Elephas maximus (Indian elephant) protein is NADH-ubiquinone oxidoreductase chain 5 (MT-ND5).